Reading from the N-terminus, the 166-residue chain is Interferon gamma (166 aa).

An N-terminal signal peptide occupies residues 1 to 23 (MKYTSYILAFQLCIVLGSLGCYC). Residue Gln-24 is modified to Pyrrolidone carboxylic acid. Asn-48, Asn-86, and Asn-120 each carry an N-linked (GlcNAc...) asparagine glycan.

This sequence belongs to the type II (or gamma) interferon family. Homodimer. Interacts with IFNGR1 (via extracellular domain); this interaction promotes IFNGR1 dimerization. In terms of tissue distribution, released primarily from activated T lymphocytes.

The protein resides in the secreted. Type II interferon produced by immune cells such as T-cells and NK cells that plays crucial roles in antimicrobial, antiviral, and antitumor responses by activating effector immune cells and enhancing antigen presentation. Primarily signals through the JAK-STAT pathway after interaction with its receptor IFNGR1 to affect gene regulation. Upon IFNG binding, IFNGR1 intracellular domain opens out to allow association of downstream signaling components JAK2, JAK1 and STAT1, leading to STAT1 activation, nuclear translocation and transcription of IFNG-regulated genes. Many of the induced genes are transcription factors such as IRF1 that are able to further drive regulation of a next wave of transcription. Plays a role in class I antigen presentation pathway by inducing a replacement of catalytic proteasome subunits with immunoproteasome subunits. In turn, increases the quantity, quality, and repertoire of peptides for class I MHC loading. Increases the efficiency of peptide generation also by inducing the expression of activator PA28 that associates with the proteasome and alters its proteolytic cleavage preference. Up-regulates as well MHC II complexes on the cell surface by promoting expression of several key molecules such as cathepsins B/CTSB, H/CTSH, and L/CTSL. Participates in the regulation of hematopoietic stem cells during development and under homeostatic conditions by affecting their development, quiescence, and differentiation. In Saimiri sciureus (Common squirrel monkey), this protein is Interferon gamma (IFNG).